Consider the following 312-residue polypeptide: Ribosomal RNA small subunit methyltransferase H (312 aa).

Residues 34 to 36 (GGH), Asp-54, Leu-83, Asp-99, and Gln-106 contribute to the S-adenosyl-L-methionine site.

This sequence belongs to the methyltransferase superfamily. RsmH family.

The protein resides in the cytoplasm. It carries out the reaction cytidine(1402) in 16S rRNA + S-adenosyl-L-methionine = N(4)-methylcytidine(1402) in 16S rRNA + S-adenosyl-L-homocysteine + H(+). In terms of biological role, specifically methylates the N4 position of cytidine in position 1402 (C1402) of 16S rRNA. This chain is Ribosomal RNA small subunit methyltransferase H, found in Rubrobacter xylanophilus (strain DSM 9941 / JCM 11954 / NBRC 16129 / PRD-1).